The primary structure comprises 150 residues: Leukotriene C4 synthase (150 aa).

Residues 1–6 (MKEETA) are Cytoplasmic-facing. Residues 7–27 (LLATVTLLGVLLQAYFSLQVI) traverse the membrane as a helical segment. At 28 to 48 (SARRTFHVSPPLTSGPPEFER) the chain is on the lumenal side. Glutathione is bound at residue Arg30. The active-site Proton donor is Arg31. Phosphoserine is present on Ser36. The helical transmembrane segment at 49–69 (VFRAQVNCSEYFPLFLATLWV) threads the bilayer. Glutathione is bound by residues 51–55 (RAQVN) and 58–59 (EY). Residues 70-73 (AGIF) are Cytoplasmic-facing. The chain crosses the membrane as a helical span at residues 74–94 (FHEGAAALCGLFYLFARLRYF). Position 93–97 (93–97 (YFQGY)) interacts with glutathione. Residues 95–104 (QGYARSAQHR) lie on the Lumenal side of the membrane. Arg104 acts as the Proton acceptor in catalysis. A helical transmembrane segment spans residues 105–124 (LDPLYASARALWLLVAMAAL). The Cytoplasmic portion of the chain corresponds to 125 to 150 (GLLVHFLPGTLRAALFRWLQVLLPMA).

The protein belongs to the MAPEG family. Homotrimer. Interacts with ALOX5AP and ALOX5. Phosphorylation at Ser-36 by RPS6KB1 inhibits the leukotriene-C4 synthase activity.

Its subcellular location is the nucleus outer membrane. The protein resides in the endoplasmic reticulum membrane. It localises to the nucleus membrane. It catalyses the reaction leukotriene C4 = leukotriene A4 + glutathione. The catalysed reaction is (13S,14S)-epoxy-(4Z,7Z,9E,11E,16Z,19Z)-docosahexaenoate + glutathione = (13R)-S-glutathionyl-(14S)-hydroxy-(4Z,7Z,9E,11E,16Z,19Z)-docosahexaenoate. The protein operates within lipid metabolism; leukotriene C4 biosynthesis. With respect to regulation, inhibited by MK886. Catalyzes the conjugation of leukotriene A4 with reduced glutathione (GSH) to form leukotriene C4 with high specificity. Can also catalyze the transfer of a glutathionyl group from glutathione (GSH) to 13(S),14(S)-epoxy-docosahexaenoic acid to form maresin conjugate in tissue regeneration 1 (MCTR1), a bioactive lipid mediator that possess potent anti-inflammatory and proresolving actions. This Rattus norvegicus (Rat) protein is Leukotriene C4 synthase (Ltc4s).